The following is a 561-amino-acid chain: DNA ligase B (561 aa).

The active-site N6-AMP-lysine intermediate is K125.

This sequence belongs to the NAD-dependent DNA ligase family. LigB subfamily.

The enzyme catalyses NAD(+) + (deoxyribonucleotide)n-3'-hydroxyl + 5'-phospho-(deoxyribonucleotide)m = (deoxyribonucleotide)n+m + AMP + beta-nicotinamide D-nucleotide.. Its function is as follows. Catalyzes the formation of phosphodiester linkages between 5'-phosphoryl and 3'-hydroxyl groups in double-stranded DNA using NAD as a coenzyme and as the energy source for the reaction. The sequence is that of DNA ligase B from Salmonella agona (strain SL483).